The chain runs to 71 residues: Small ribosomal subunit protein bS21 (71 aa).

The disordered stretch occupies residues 43–71; the sequence is TERKRAKASAVKRHAKKLARENARRTRLY. The segment covering 46–59 has biased composition (basic residues); sequence KRAKASAVKRHAKK. A compositionally biased stretch (basic and acidic residues) spans 60 to 71; it reads LARENARRTRLY.

The protein belongs to the bacterial ribosomal protein bS21 family.

The polypeptide is Small ribosomal subunit protein bS21 (Pectobacterium atrosepticum (strain SCRI 1043 / ATCC BAA-672) (Erwinia carotovora subsp. atroseptica)).